Consider the following 221-residue polypeptide: MAITTAESSYEKRIKALFDKQVQMEAREASVIKKVFKFNSNLLDVKEAVVHHHRDVEKLQKVVIQRREEMEKRVSFMEELAQEVEATKQRNLVMREQIKQQKMLVRQRKNEIMESIHTLSKATGTYINREALPARVKGVTVLHGDNRDELIPFDLKATDVEGLDSLCQHLHSLNIDVSQWQQLVSLATEMSMKSHPATPPKDAAKCKSIIEIDLTSPTIQA.

Positions 63–114 (VIQRREEMEKRVSFMEELAQEVEATKQRNLVMREQIKQQKMLVRQRKNEIME) form a coiled coil.

The protein belongs to the SPC25 family. As to quaternary structure, component of the Ndc80 complex, which is composed of Ndc80, Nuf2 and Spc25.

The protein resides in the nucleus. It is found in the chromosome. It localises to the centromere. Its subcellular location is the kinetochore. In terms of biological role, acts as a component of the essential kinetochore-associated Ndc80 complex, which is required for chromosome segregation and spindle checkpoint activity during meiosis and mitosis. Required for kinetochore integrity and the organization of stable microtubule binding sites in the outer plate of the kinetochore. Participates in SAC signaling that responds specifically to disruptions in spindle microtubule dynamics. The NDC80 complex synergistically enhances the affinity of the SKA1 complex for microtubules and may allow the NDC80 complex to track depolymerizing microtubules. The protein is Kinetochore protein Spc25 of Drosophila eugracilis (Fruit fly).